Reading from the N-terminus, the 102-residue chain is Gastrin/cholecystokinin-like peptide (102 aa).

The first 20 residues, 1-20 (MDKKVCVSILLAMLAIAALC), serve as a signal peptide directing secretion. Residues 21–45 (RPMTELESARHGAQRKNSISDVSRR) constitute a propeptide that is removed on maturation. The residue at position 86 (tyrosine 86) is a Sulfotyrosine. At phenylalanine 92 the chain carries Phenylalanine amide. Positions 96–102 (SSEVTES) are excised as a propeptide.

Belongs to the gastrin/cholecystokinin family. In terms of tissue distribution, expressed in antrum, duodenum, colon, pancreas, brain and testis. No expression found in kidney, lung, liver, skin or distal two-thirds of small intestine. In the brain, strongly expressed in the pituitary gland with moderate expression in the neural lobe, brain stem and hypothalamus.

The protein localises to the secreted. In terms of biological role, may control digestion processes. This chain is Gastrin/cholecystokinin-like peptide (GAST), found in Aquarana catesbeiana (American bullfrog).